The following is a 570-amino-acid chain: Glycine--tRNA ligase (570 aa).

Residues R95 and E159 each coordinate substrate. ATP-binding positions include 191 to 193, 201 to 206, 312 to 313, and 426 to 429; these read RNE, IRLREF, EV, and GLDR. 206-210 contacts substrate; that stretch reads FNQAE. A substrate-binding site is contributed by 422 to 426; that stretch reads EPSFG.

Belongs to the class-II aminoacyl-tRNA synthetase family.

Its subcellular location is the cytoplasm. It catalyses the reaction tRNA(Gly) + glycine + ATP = glycyl-tRNA(Gly) + AMP + diphosphate. In terms of biological role, catalyzes the attachment of glycine to tRNA(Gly). The protein is Glycine--tRNA ligase of Archaeoglobus fulgidus (strain ATCC 49558 / DSM 4304 / JCM 9628 / NBRC 100126 / VC-16).